Consider the following 138-residue polypeptide: Transcription antitermination protein NusB (138 aa).

This sequence belongs to the NusB family.

Its function is as follows. Involved in transcription antitermination. Required for transcription of ribosomal RNA (rRNA) genes. Binds specifically to the boxA antiterminator sequence of the ribosomal RNA (rrn) operons. The protein is Transcription antitermination protein NusB of Yersinia pseudotuberculosis serotype O:1b (strain IP 31758).